The following is a 326-amino-acid chain: Glycerol-3-phosphate dehydrogenase [NAD(P)+] (326 aa).

NADPH contacts are provided by W13, R33, and K107. Sn-glycerol 3-phosphate is bound by residues K107, G135, and S137. A139 provides a ligand contact to NADPH. Positions 190, 243, 253, 254, and 255 each coordinate sn-glycerol 3-phosphate. K190 (proton acceptor) is an active-site residue. R254 serves as a coordination point for NADPH. NADPH-binding residues include L273 and E275.

It belongs to the NAD-dependent glycerol-3-phosphate dehydrogenase family.

It is found in the cytoplasm. The catalysed reaction is sn-glycerol 3-phosphate + NAD(+) = dihydroxyacetone phosphate + NADH + H(+). The enzyme catalyses sn-glycerol 3-phosphate + NADP(+) = dihydroxyacetone phosphate + NADPH + H(+). The protein operates within membrane lipid metabolism; glycerophospholipid metabolism. Catalyzes the reduction of the glycolytic intermediate dihydroxyacetone phosphate (DHAP) to sn-glycerol 3-phosphate (G3P), the key precursor for phospholipid synthesis. In Brucella ovis (strain ATCC 25840 / 63/290 / NCTC 10512), this protein is Glycerol-3-phosphate dehydrogenase [NAD(P)+].